Consider the following 463-residue polypeptide: Cysteine--tRNA ligase (463 aa).

A Zn(2+)-binding site is contributed by cysteine 28. The 'HIGH' region signature appears at 30–40 (ITIYDLCHIGH). Cysteine 209, histidine 234, and glutamate 238 together coordinate Zn(2+). The 'KMSKS' region motif lies at 266–270 (KMSKS). Lysine 269 serves as a coordination point for ATP.

It belongs to the class-I aminoacyl-tRNA synthetase family. As to quaternary structure, monomer. Zn(2+) is required as a cofactor.

Its subcellular location is the cytoplasm. The catalysed reaction is tRNA(Cys) + L-cysteine + ATP = L-cysteinyl-tRNA(Cys) + AMP + diphosphate. The chain is Cysteine--tRNA ligase from Proteus mirabilis (strain HI4320).